The chain runs to 151 residues: Transcriptional repressor NrdR (151 aa).

Residues 3-34 (CPYCAYGESKVVDSRSTEDGSSIRRRRECLKC) fold into a zinc finger. Residues 49 to 139 (ILVIKKNMSR…VYRQFKDINT (91 aa)) form the ATP-cone domain.

Belongs to the NrdR family. It depends on Zn(2+) as a cofactor.

Negatively regulates transcription of bacterial ribonucleotide reductase nrd genes and operons by binding to NrdR-boxes. The polypeptide is Transcriptional repressor NrdR (Clostridium botulinum (strain 657 / Type Ba4)).